A 257-amino-acid polypeptide reads, in one-letter code: Zinc-finger homeodomain protein 6 (257 aa).

The segment at 1-35 (MEFRGHDEPVDEMGVAYGRTPPSSSSSPAASASAG) is disordered. Low complexity predominate over residues 21–35 (PPSSSSSPAASASAG). The segment at 45-93 (YHECLRNHAAAMGGHVVDGCGEFMPMPGDAADALKCAACGCHRSFHRKD) adopts a ZF-HD dimerization-type; degenerate zinc-finger fold. The span at 106–125 (PSPPTPRVPLLMPPPQPQPH) shows a compositional bias: pro residues. 2 disordered regions span residues 106-182 (PSPP…TKFT) and 228-257 (NNKS…QQQQ). Low complexity predominate over residues 141-155 (YHHTPSGSGGTTTES). The homeobox DNA-binding region spans 174 to 237 (RKRFRTKFTP…NNKSSIGSSS (64 aa)). Low complexity predominate over residues 242–257 (RRQPQEQQSQQQQQQQ).

As to quaternary structure, homo- and heterodimer with other ZFHD proteins.

It is found in the nucleus. Its function is as follows. Putative transcription factor. The chain is Zinc-finger homeodomain protein 6 (ZHD6) from Oryza sativa subsp. indica (Rice).